We begin with the raw amino-acid sequence, 346 residues long: Biotin synthase (346 aa).

The Radical SAM core domain maps to 41–265; the sequence is NEVQISTLLS…MMPHSYVRLS (225 aa). [4Fe-4S] cluster contacts are provided by Cys56, Cys60, and Cys63. [2Fe-2S] cluster is bound by residues Cys100, Cys131, Cys191, and Arg263.

Belongs to the radical SAM superfamily. Biotin synthase family. As to quaternary structure, homodimer. [4Fe-4S] cluster serves as cofactor. [2Fe-2S] cluster is required as a cofactor.

The enzyme catalyses (4R,5S)-dethiobiotin + (sulfur carrier)-SH + 2 reduced [2Fe-2S]-[ferredoxin] + 2 S-adenosyl-L-methionine = (sulfur carrier)-H + biotin + 2 5'-deoxyadenosine + 2 L-methionine + 2 oxidized [2Fe-2S]-[ferredoxin]. It participates in cofactor biosynthesis; biotin biosynthesis; biotin from 7,8-diaminononanoate: step 2/2. In terms of biological role, catalyzes the conversion of dethiobiotin (DTB) to biotin by the insertion of a sulfur atom into dethiobiotin via a radical-based mechanism. This chain is Biotin synthase, found in Pseudoalteromonas translucida (strain TAC 125).